The chain runs to 239 residues: Fatty acid metabolism regulator protein (239 aa).

The 69-residue stretch at 6–74 (QSPAGFAEEY…HGKPTKVNNF (69 aa)) folds into the HTH gntR-type domain. The segment at residues 34–53 (ERELSELIGVTRTTLREVLQ) is a DNA-binding region (H-T-H motif).

In terms of assembly, homodimer.

It is found in the cytoplasm. Functionally, multifunctional regulator of fatty acid metabolism. This chain is Fatty acid metabolism regulator protein, found in Shigella flexneri.